The following is a 448-amino-acid chain: MSDRSLLVVVLAAGEGTRMASRLPKVLHKVAGRTMLHHVLAATRAAGATRTAVVVGPGREDVAAEVRKIVPDAEVFEQTERLGTAHAVLAARAALENGADDVLVLYADTPLVRPETLGLLRAPLKAGAAVAALGFEPADPTGYGRLVTAGDELVAIREEKDASAAEKAIRFCNAGLMALAGAHALSILERIGNANAKGEYYLTDAVEIARADGLSAVAARADADEVAGVNSRVQLAEAEAILQRRLRLAAMAGGATLVAPETVFLSADTVLGRDVIVEPHVVFGPGVSVGDDVVIHSFCHLEGARLESGVTIGPYARLRPGTQLDSGVRIGNFVETKAAHIESGAKVNHLSYVGDAHVGADANLGAGTITCNYDGFGKYRTEIGAGAFIGVNSALVAPVTVGKGAFVGTGAVITSDVPEDALAIARSRQVVKEGWAKAFRAARSKPKG.

The tract at residues 1-232 (MSDRSLLVVV…ADEVAGVNSR (232 aa)) is pyrophosphorylase. UDP-N-acetyl-alpha-D-glucosamine-binding positions include 11 to 14 (LAAG), lysine 25, glutamine 78, and 83 to 84 (GT). Aspartate 108 is a binding site for Mg(2+). Positions 144, 158, 173, and 230 each coordinate UDP-N-acetyl-alpha-D-glucosamine. A Mg(2+)-binding site is contributed by asparagine 230. The tract at residues 233 to 253 (VQLAEAEAILQRRLRLAAMAG) is linker. An N-acetyltransferase region spans residues 254-448 (GATLVAPETV…FRAARSKPKG (195 aa)). Residues arginine 319 and lysine 337 each coordinate UDP-N-acetyl-alpha-D-glucosamine. The active-site Proton acceptor is the histidine 349. The UDP-N-acetyl-alpha-D-glucosamine site is built by tyrosine 352 and asparagine 363. Acetyl-CoA-binding positions include alanine 366, 372 to 373 (NY), threonine 409, and arginine 426.

In the N-terminal section; belongs to the N-acetylglucosamine-1-phosphate uridyltransferase family. This sequence in the C-terminal section; belongs to the transferase hexapeptide repeat family. In terms of assembly, homotrimer. It depends on Mg(2+) as a cofactor.

The protein resides in the cytoplasm. The catalysed reaction is alpha-D-glucosamine 1-phosphate + acetyl-CoA = N-acetyl-alpha-D-glucosamine 1-phosphate + CoA + H(+). It catalyses the reaction N-acetyl-alpha-D-glucosamine 1-phosphate + UTP + H(+) = UDP-N-acetyl-alpha-D-glucosamine + diphosphate. The protein operates within nucleotide-sugar biosynthesis; UDP-N-acetyl-alpha-D-glucosamine biosynthesis; N-acetyl-alpha-D-glucosamine 1-phosphate from alpha-D-glucosamine 6-phosphate (route II): step 2/2. Its pathway is nucleotide-sugar biosynthesis; UDP-N-acetyl-alpha-D-glucosamine biosynthesis; UDP-N-acetyl-alpha-D-glucosamine from N-acetyl-alpha-D-glucosamine 1-phosphate: step 1/1. It functions in the pathway bacterial outer membrane biogenesis; LPS lipid A biosynthesis. Its function is as follows. Catalyzes the last two sequential reactions in the de novo biosynthetic pathway for UDP-N-acetylglucosamine (UDP-GlcNAc). The C-terminal domain catalyzes the transfer of acetyl group from acetyl coenzyme A to glucosamine-1-phosphate (GlcN-1-P) to produce N-acetylglucosamine-1-phosphate (GlcNAc-1-P), which is converted into UDP-GlcNAc by the transfer of uridine 5-monophosphate (from uridine 5-triphosphate), a reaction catalyzed by the N-terminal domain. In Xanthobacter autotrophicus (strain ATCC BAA-1158 / Py2), this protein is Bifunctional protein GlmU.